The following is a 560-amino-acid chain: MLNQRPLYIPFAGPALLETPLLNKGSAFSSEERDSFNLTGLLPHNIETIEEQSSRAYLQLRSFTSDMDKHIYLRNIQDTNETLFHHLIEQHIEEVMPLIYTPTVGQACEKFSQIYRRKRGLFISYPERHKIDDMLQNATKQNVKVIVVTDGERILGLGDQGIGGMGIPIGKLALYTACGGISPAYCLPILLDVGTNNQQLLDDPMYMGWRNPRISGDEYNEFVDLFIQAVKRRWPEVLLQFEDFAQENATPLLNKYRDQLCCFNDDIQGTAAVSVGTLIAACLNKSQKLSQQNIAFLGAGSAGCGIAEHIIRQMQREGLTEEQARRQVFMVDRYGLLTDSMTELQKFQTPLVQKESDIEHWDKSQKLGLAQVVKQARITVLFGVSGQKGLFTQEVVEALCANTEHPIVLPLSNPTSRVEATPQEVTNWSRGKAIVATGSPFPNTTFEGQSYEVSQCNNSYIFPGIGLGVLAARATGISDNMLTAASQALADISVEYEKAPGAILPPIKFIREISEKIAYAVALQAIEDKLALPVTAENLERRLKANFWLPKYRDYRRTSF.

Residue Tyr100 is the Proton donor of the active site. Arg153 lines the NAD(+) pocket. Lys171 acts as the Proton acceptor in catalysis. Residues Glu242, Asp243, and Asp266 each contribute to the a divalent metal cation site. 2 residues coordinate NAD(+): Asp266 and Asn413.

It belongs to the malic enzymes family. Homotetramer. Requires Mg(2+) as cofactor. Mn(2+) serves as cofactor.

It catalyses the reaction (S)-malate + NAD(+) = pyruvate + CO2 + NADH. It carries out the reaction oxaloacetate + H(+) = pyruvate + CO2. This chain is NAD-dependent malic enzyme, found in Psychrobacter cryohalolentis (strain ATCC BAA-1226 / DSM 17306 / VKM B-2378 / K5).